A 929-amino-acid chain; its full sequence is Isoleucine--tRNA ligase (929 aa).

Residues proline 58–histidine 68 carry the 'HIGH' region motif. Glutamate 563 contributes to the L-isoleucyl-5'-AMP binding site. The 'KMSKS' region motif lies at lysine 605–serine 609. ATP is bound at residue lysine 608. The Zn(2+) site is built by cysteine 892, cysteine 895, cysteine 912, and cysteine 915.

The protein belongs to the class-I aminoacyl-tRNA synthetase family. IleS type 1 subfamily. As to quaternary structure, monomer. It depends on Zn(2+) as a cofactor.

It is found in the cytoplasm. The enzyme catalyses tRNA(Ile) + L-isoleucine + ATP = L-isoleucyl-tRNA(Ile) + AMP + diphosphate. In terms of biological role, catalyzes the attachment of isoleucine to tRNA(Ile). As IleRS can inadvertently accommodate and process structurally similar amino acids such as valine, to avoid such errors it has two additional distinct tRNA(Ile)-dependent editing activities. One activity is designated as 'pretransfer' editing and involves the hydrolysis of activated Val-AMP. The other activity is designated 'posttransfer' editing and involves deacylation of mischarged Val-tRNA(Ile). The protein is Isoleucine--tRNA ligase of Neisseria meningitidis serogroup A / serotype 4A (strain DSM 15465 / Z2491).